The chain runs to 1371 residues: Probable serine/threonine-protein kinase DDB_G0293292 (1371 aa).

Protein kinase domains lie at 9–269 (NKIL…HPNT) and 1131–1371 (FKEV…QPTL). Residues 15–23 (IDDGNTKRK) and lysine 39 each bind ATP. Aspartate 143 functions as the Proton acceptor in the catalytic mechanism.

The protein belongs to the protein kinase superfamily. Ser/Thr protein kinase family.

It carries out the reaction L-seryl-[protein] + ATP = O-phospho-L-seryl-[protein] + ADP + H(+). The enzyme catalyses L-threonyl-[protein] + ATP = O-phospho-L-threonyl-[protein] + ADP + H(+). In Dictyostelium discoideum (Social amoeba), this protein is Probable serine/threonine-protein kinase DDB_G0293292.